Reading from the N-terminus, the 55-residue chain is Large ribosomal subunit protein bL33B (55 aa).

Belongs to the bacterial ribosomal protein bL33 family.

This chain is Large ribosomal subunit protein bL33B, found in Kineococcus radiotolerans (strain ATCC BAA-149 / DSM 14245 / SRS30216).